A 248-amino-acid chain; its full sequence is Secreted and transmembrane protein 1 (248 aa).

The N-terminal stretch at 1–28 (MQTCPLAFPGHVSQALGTLLFLAASLSA) is a signal peptide. Residues 29-145 (QNEGWDSPIC…AEPQSAPDTG (117 aa)) are Extracellular-facing. A disulfide bond links C38 and C55. N56 is a glycosylation site (N-linked (GlcNAc...) asparagine). Residues 146–166 (FWPVPAVVTAVFILLVALVMF) form a helical membrane-spanning segment. Topologically, residues 167–248 (AWYRCRCSQQ…QPLFPYAADP (82 aa)) are cytoplasmic.

It belongs to the SECTM family. Interacts with CD7. As to expression, detected at the highest levels in peripheral blood leukocytes and breast cancer cell lines. Found in leukocytes of the myeloid lineage, with the strongest expression observed in granulocytes and no detectable expression in lymphocytes. Expressed in thymic epithelial cells and fibroblasts.

It is found in the cell membrane. The protein resides in the secreted. In terms of biological role, may be involved in thymocyte signaling. The protein is Secreted and transmembrane protein 1 (SECTM1) of Homo sapiens (Human).